Consider the following 204-residue polypeptide: Imidazoleglycerol-phosphate dehydratase (204 aa).

The protein belongs to the imidazoleglycerol-phosphate dehydratase family.

The protein localises to the cytoplasm. The enzyme catalyses D-erythro-1-(imidazol-4-yl)glycerol 3-phosphate = 3-(imidazol-4-yl)-2-oxopropyl phosphate + H2O. It functions in the pathway amino-acid biosynthesis; L-histidine biosynthesis; L-histidine from 5-phospho-alpha-D-ribose 1-diphosphate: step 6/9. The polypeptide is Imidazoleglycerol-phosphate dehydratase (Rhodococcus opacus (strain B4)).